The following is a 373-amino-acid chain: 3 beta-hydroxysteroid dehydrogenase/Delta 5--&gt;4-isomerase type 3 (373 aa).

Catalysis depends on Y155, which acts as the Proton acceptor. K159 provides a ligand contact to NAD(+). The chain crosses the membrane as a helical span at residues 288-308 (VPILYWLAFLLETVSFLLSPI).

This sequence belongs to the 3-beta-HSD family. In terms of tissue distribution, liver and kidney. Greater expression in liver.

It localises to the endoplasmic reticulum membrane. It is found in the mitochondrion membrane. The catalysed reaction is a 3beta-hydroxy-Delta(5)-steroid + NAD(+) = a 3-oxo-Delta(5)-steroid + NADH + H(+). It carries out the reaction a 3-oxo-Delta(5)-steroid = a 3-oxo-Delta(4)-steroid. It functions in the pathway lipid metabolism; steroid biosynthesis. Its function is as follows. 3-beta-HSD is a bifunctional enzyme, that catalyzes the oxidative conversion of Delta(5)-ene-3-beta-hydroxy steroid, and the oxidative conversion of ketosteroids. The 3-beta-HSD enzymatic system plays a crucial role in the biosynthesis of all classes of hormonal steroids. The chain is 3 beta-hydroxysteroid dehydrogenase/Delta 5--&gt;4-isomerase type 3 (Hsd3b3) from Mus musculus (Mouse).